Consider the following 64-residue polypeptide: Large ribosomal subunit protein bL35 (64 aa).

The disordered stretch occupies residues 1–54 (MPKIKSNSGAAKRFKKTAHGFKHKQSFRSHILTKKSTKRKRQLRGMKQIHDADK). Residues 12 to 44 (KRFKKTAHGFKHKQSFRSHILTKKSTKRKRQLR) are compositionally biased toward basic residues.

The protein belongs to the bacterial ribosomal protein bL35 family.

This is Large ribosomal subunit protein bL35 from Chromohalobacter salexigens (strain ATCC BAA-138 / DSM 3043 / CIP 106854 / NCIMB 13768 / 1H11).